We begin with the raw amino-acid sequence, 348 residues long: MTAPSQVLKIRRPDDWHVHLRDGDMLKTVVPYTSEIYGRAIVMPNLASPITTVDAAIAYRQRILDAVPAGHDFTPLMTCYLTDSLDADELERGFHEGVFTAAKLYPANATTNSSHGVTSVDAIMPVLERMEKLGMPLLVHGEVTHADVDIFDREARFIDTVMEPLRQRLTTLKVVFEHITTKDAAQYVRDGNDYLAATITPQHLMFNRNDMLVGGIRPHLYCLPILKRNIHQQALRELVASGFTRAFLGTDSAPHSRHRKETSCGCAGCFNAPSALGSYAAVFEEMNALAHFEAFCSLNGPQFYGLPVNTGWVELVRDEQHVPENIALADDSLVPFLAGETVRWSVKK.

Zn(2+) contacts are provided by histidine 17 and histidine 19. Residues 19 to 21 and asparagine 45 contribute to the substrate site; that span reads HLR. 3 residues coordinate Zn(2+): lysine 103, histidine 140, and histidine 178. Residue lysine 103 is modified to N6-carboxylysine. A substrate-binding site is contributed by histidine 140. Residue leucine 223 coordinates substrate. Aspartate 251 contributes to the Zn(2+) binding site. The active site involves aspartate 251. 2 residues coordinate substrate: histidine 255 and alanine 267.

The protein belongs to the metallo-dependent hydrolases superfamily. DHOase family. Class II DHOase subfamily. As to quaternary structure, homodimer. It depends on Zn(2+) as a cofactor.

The catalysed reaction is (S)-dihydroorotate + H2O = N-carbamoyl-L-aspartate + H(+). The protein operates within pyrimidine metabolism; UMP biosynthesis via de novo pathway; (S)-dihydroorotate from bicarbonate: step 3/3. Its function is as follows. Catalyzes the reversible cyclization of carbamoyl aspartate to dihydroorotate. This Salmonella newport (strain SL254) protein is Dihydroorotase.